A 99-amino-acid polypeptide reads, in one-letter code: Cyclin-dependent protein kinase inhibitor SMR7 (99 aa).

Residues 49-70 (ICITPTARGAKTPECPAAPRKR) form a disordered region.

Expressed in root meristems after induction.

Probable cyclin-dependent protein kinase (CDK) inhibitor that functions as a repressor of mitosis in the endoreduplication cell cycle. Acts as a potent cell cycle inhibitor, regulating a hydroxyurea-dependent checkpoint in leaves. In Arabidopsis thaliana (Mouse-ear cress), this protein is Cyclin-dependent protein kinase inhibitor SMR7.